Here is a 185-residue protein sequence, read N- to C-terminus: Casparian strip membrane protein 2 (185 aa).

Over 1 to 25 the chain is Cytoplasmic; that stretch reads MKAVSIEAGEGSKAKRVHGVNRGIS. The helical transmembrane segment at 26–46 threads the bilayer; sequence VFDLVLRIVALVGTLASAVAM. The Extracellular portion of the chain corresponds to 47–73; it reads GTADQALSFSTQIVNFEAQYDDIDAFK. A helical membrane pass occupies residues 74 to 94; that stretch reads FFVVSNSITCVYLALSIPISI. Residues 95–106 are Cytoplasmic-facing; that stretch reads FHIIRSRAGKSR. Residues 107 to 127 form a helical membrane-spanning segment; the sequence is VLLIVLDAIMLVFLTSGASAA. The Extracellular segment spans residues 128 to 160; it reads AAIVYLAHNGNTSTNWFSICQQYTDFCQRSAGS. An N-linked (GlcNAc...) asparagine glycan is attached at N138. Residues 161-181 traverse the membrane as a helical segment; the sequence is LIGSFGAMALMVLLIILSSIA. Over 182 to 185 the chain is Cytoplasmic; that stretch reads LSRR.

This sequence belongs to the Casparian strip membrane proteins (CASP) family. Homodimer and heterodimers.

It is found in the cell membrane. Functionally, regulates membrane-cell wall junctions and localized cell wall deposition. Required for establishment of the Casparian strip membrane domain (CSD) and the subsequent formation of Casparian strips, a cell wall modification of the root endodermis that determines an apoplastic barrier between the intraorganismal apoplasm and the extraorganismal apoplasm and prevents lateral diffusion. This chain is Casparian strip membrane protein 2, found in Solanum demissum (Wild potato).